Reading from the N-terminus, the 246-residue chain is Orotidine 5'-phosphate decarboxylase (246 aa).

Residues Asp-22, Lys-44, 71-80 (DLKYHDIPHT), Thr-130, Arg-191, Gln-201, Gly-221, and Arg-222 each bind substrate. Lys-73 serves as the catalytic Proton donor.

Belongs to the OMP decarboxylase family. Type 1 subfamily. In terms of assembly, homodimer.

It catalyses the reaction orotidine 5'-phosphate + H(+) = UMP + CO2. It functions in the pathway pyrimidine metabolism; UMP biosynthesis via de novo pathway; UMP from orotate: step 2/2. Functionally, catalyzes the decarboxylation of orotidine 5'-monophosphate (OMP) to uridine 5'-monophosphate (UMP). This is Orotidine 5'-phosphate decarboxylase from Neisseria gonorrhoeae (strain ATCC 700825 / FA 1090).